The following is a 219-amino-acid chain: Nuclear transcription factor Y subunit B-8 (219 aa).

The segment at Met1–Asp26 is disordered. The DNA-binding element occupies Leu29–Ser35. The tract at residues Val56–Ile67 is subunit association domain (SAD). Residues Ala119–Thr134 show a composition bias toward low complexity. Disordered regions lie at residues Ala119–Ala142 and Gly166–Ala219. A compositionally biased stretch (gly residues) spans Gly190–Ser206.

Belongs to the NFYB/HAP3 subunit family. Heterotrimeric transcription factor composed of three components, NF-YA, NF-YB and NF-YC. NF-YB and NF-YC must interact and dimerize for NF-YA association and DNA binding. Interacts with NFYC2, NFYC4 and NFYC6.

The protein localises to the cytoplasm. In terms of biological role, component of the NF-Y/HAP transcription factor complex. The sequence is that of Nuclear transcription factor Y subunit B-8 from Oryza sativa subsp. japonica (Rice).